The sequence spans 151 residues: ATP synthase subunit b' (151 aa).

The chain crosses the membrane as a helical span at residues Thr-18–Phe-38.

The protein belongs to the ATPase B chain family. As to quaternary structure, F-type ATPases have 2 components, F(1) - the catalytic core - and F(0) - the membrane proton channel. F(1) has five subunits: alpha(3), beta(3), gamma(1), delta(1), epsilon(1). F(0) has four main subunits: a(1), b(1), b'(1) and c(10-14). The alpha and beta chains form an alternating ring which encloses part of the gamma chain. F(1) is attached to F(0) by a central stalk formed by the gamma and epsilon chains, while a peripheral stalk is formed by the delta, b and b' chains.

The protein localises to the cellular thylakoid membrane. Its function is as follows. F(1)F(0) ATP synthase produces ATP from ADP in the presence of a proton or sodium gradient. F-type ATPases consist of two structural domains, F(1) containing the extramembraneous catalytic core and F(0) containing the membrane proton channel, linked together by a central stalk and a peripheral stalk. During catalysis, ATP synthesis in the catalytic domain of F(1) is coupled via a rotary mechanism of the central stalk subunits to proton translocation. Component of the F(0) channel, it forms part of the peripheral stalk, linking F(1) to F(0). The b'-subunit is a diverged and duplicated form of b found in plants and photosynthetic bacteria. This is ATP synthase subunit b' from Prochlorococcus marinus (strain MIT 9303).